A 482-amino-acid chain; its full sequence is Proline--tRNA ligase (482 aa).

Belongs to the class-II aminoacyl-tRNA synthetase family. ProS type 3 subfamily. In terms of assembly, homodimer.

Its subcellular location is the cytoplasm. The catalysed reaction is tRNA(Pro) + L-proline + ATP = L-prolyl-tRNA(Pro) + AMP + diphosphate. Catalyzes the attachment of proline to tRNA(Pro) in a two-step reaction: proline is first activated by ATP to form Pro-AMP and then transferred to the acceptor end of tRNA(Pro). In Natronomonas pharaonis (strain ATCC 35678 / DSM 2160 / CIP 103997 / JCM 8858 / NBRC 14720 / NCIMB 2260 / Gabara) (Halobacterium pharaonis), this protein is Proline--tRNA ligase.